We begin with the raw amino-acid sequence, 126 residues long: Small ribosomal subunit protein uS13 (126 aa).

The disordered stretch occupies residues 99 to 126; that stretch reads LRGQSTKNNARTRKGKRKTVANKKRVTK. Residues 108 to 126 show a composition bias toward basic residues; sequence ARTRKGKRKTVANKKRVTK.

This sequence belongs to the universal ribosomal protein uS13 family. Part of the 30S ribosomal subunit. Forms a loose heterodimer with protein S19. Forms two bridges to the 50S subunit in the 70S ribosome.

Functionally, located at the top of the head of the 30S subunit, it contacts several helices of the 16S rRNA. In the 70S ribosome it contacts the 23S rRNA (bridge B1a) and protein L5 of the 50S subunit (bridge B1b), connecting the 2 subunits; these bridges are implicated in subunit movement. Contacts the tRNAs in the A and P-sites. This Azobacteroides pseudotrichonymphae genomovar. CFP2 protein is Small ribosomal subunit protein uS13.